We begin with the raw amino-acid sequence, 581 residues long: Nicotinic acid-CoA ligase pyr1 (581 aa).

204 to 215 (MFLTSGTSGLPK) contributes to the AMP binding site. An AMP-binding region spans residues 477-555 (EIEGILLKDP…DEIPRTGIGK (79 aa)).

It belongs to the ATP-dependent AMP-binding enzyme family.

The catalysed reaction is nicotinate + ATP + CoA = nicotinyl-CoA + AMP + diphosphate. It functions in the pathway secondary metabolite biosynthesis; terpenoid biosynthesis. In terms of biological role, nicotinic acid-CoA ligase; part of the gene cluster that mediates the biosynthesis of pyripyropene A, a specific human acyl-coenzyme A:cholesterol acyltransferase 2 inhibitor. The first step of the pathway is the synthesis of nicotinyl-CoA from nicotinic acid by the nicotinic acid-CoA ligase pyr1. Nicotinyl-CoA is then a substrate of polyketide synthase pyr2 to produce 4-hydroxy-6-(3-pyridinyl)-2H-pyran-2-one (HPPO) which is further prenylated by the polyprenyl transferase pyr6 to yield farnesyl-HPPO. The next steps consist of an epoxidation of farnesyl-HPPO to epoxyfarnesyl-HPPO by FAD-dependent monooxygenase pyr5 and a cyclization of the terpenoid portion by the terpene cyclase pyr4 to yield deacetyl-pyripyropene E. The 2 cytochrome P450 monooxygenases pyr3 and pyr9, and the 2 acetyltransferases pyr7 and pyr8 are involved in the conversion of deacetyl-pyripyropene E into pyripyropene A through several cycles of oxidation and acetylation steps. Pyr7 acetylates deacetyl-pyripyropene E to pyripyropene E which is oxidized to 11-deacetyl-pyripyropene O by pyr3, which is in turn acetylated into pyripyropene O by pyr8. Pyripyropene O is then oxidized to deacetyl-pyripyropene A by pyr9. Deacetyl-pyripyropene A is finally acetylated to pyripyropene A by pyr8. The polypeptide is Nicotinic acid-CoA ligase pyr1 (Aspergillus fumigatus (strain ATCC MYA-4609 / CBS 101355 / FGSC A1100 / Af293) (Neosartorya fumigata)).